The primary structure comprises 351 residues: UDP-N-acetylglucosamine--N-acetylmuramyl-(pentapeptide) pyrophosphoryl-undecaprenol N-acetylglucosamine transferase (351 aa).

Residues 12-14 (TGG), asparagine 124, arginine 160, serine 188, isoleucine 239, 258-263 (ALTVCE), and glutamine 283 contribute to the UDP-N-acetyl-alpha-D-glucosamine site.

This sequence belongs to the glycosyltransferase 28 family. MurG subfamily.

It is found in the cell inner membrane. The enzyme catalyses di-trans,octa-cis-undecaprenyl diphospho-N-acetyl-alpha-D-muramoyl-L-alanyl-D-glutamyl-meso-2,6-diaminopimeloyl-D-alanyl-D-alanine + UDP-N-acetyl-alpha-D-glucosamine = di-trans,octa-cis-undecaprenyl diphospho-[N-acetyl-alpha-D-glucosaminyl-(1-&gt;4)]-N-acetyl-alpha-D-muramoyl-L-alanyl-D-glutamyl-meso-2,6-diaminopimeloyl-D-alanyl-D-alanine + UDP + H(+). Its pathway is cell wall biogenesis; peptidoglycan biosynthesis. Cell wall formation. Catalyzes the transfer of a GlcNAc subunit on undecaprenyl-pyrophosphoryl-MurNAc-pentapeptide (lipid intermediate I) to form undecaprenyl-pyrophosphoryl-MurNAc-(pentapeptide)GlcNAc (lipid intermediate II). The chain is UDP-N-acetylglucosamine--N-acetylmuramyl-(pentapeptide) pyrophosphoryl-undecaprenol N-acetylglucosamine transferase from Glaesserella parasuis serovar 5 (strain SH0165) (Haemophilus parasuis).